The primary structure comprises 905 residues: Protein translocase subunit SecA (905 aa).

ATP is bound by residues glutamine 89, 107 to 111, and aspartate 502; that span reads GEGKT. The tract at residues 837–885 is disordered; that stretch reads EQTDVGDPILNDQNKKNSSTLWTPSQENKFVNPKDRNPSDSTTWGKVGR. A compositionally biased stretch (polar residues) spans 852 to 865; that stretch reads KNSSTLWTPSQENK. Zn(2+) contacts are provided by cysteine 889, cysteine 891, cysteine 900, and histidine 901.

The protein belongs to the SecA family. Monomer and homodimer. Part of the essential Sec protein translocation apparatus which comprises SecA, SecYEG and auxiliary proteins SecDF-YajC and YidC. The cofactor is Zn(2+).

It is found in the cell inner membrane. The protein resides in the cytoplasm. The enzyme catalyses ATP + H2O + cellular proteinSide 1 = ADP + phosphate + cellular proteinSide 2.. Part of the Sec protein translocase complex. Interacts with the SecYEG preprotein conducting channel. Has a central role in coupling the hydrolysis of ATP to the transfer of proteins into and across the cell membrane, serving both as a receptor for the preprotein-SecB complex and as an ATP-driven molecular motor driving the stepwise translocation of polypeptide chains across the membrane. The polypeptide is Protein translocase subunit SecA (Bartonella henselae (strain ATCC 49882 / DSM 28221 / CCUG 30454 / Houston 1) (Rochalimaea henselae)).